The following is a 206-amino-acid chain: LexA repressor (206 aa).

Positions 28–48 form a DNA-binding region, H-T-H motif; it reads VREIGQAVGLASSSTVHGHLS. Residues S128 and K166 each act as for autocatalytic cleavage activity in the active site.

Belongs to the peptidase S24 family. Homodimer.

The catalysed reaction is Hydrolysis of Ala-|-Gly bond in repressor LexA.. Its function is as follows. Represses a number of genes involved in the response to DNA damage (SOS response), including recA and lexA. In the presence of single-stranded DNA, RecA interacts with LexA causing an autocatalytic cleavage which disrupts the DNA-binding part of LexA, leading to derepression of the SOS regulon and eventually DNA repair. In Bacillus thuringiensis (strain Al Hakam), this protein is LexA repressor.